Reading from the N-terminus, the 240-residue chain is MKRPSGRAADQLRSIRITRNYTKHAEGSVLVEFGDTKVICTVSVENGVPRFLKGQGQGWLTAEYGMLPRATGERNQREASRGKQGGRTLEIQRLIGRSLRAALDMSKLGDVTLYVDCDVIQADGGTRTASITGAMVALVDALKVIKKRGGLKAGDPLKQMIAAVSVGMYQGEPVLDLDYLEDSAAETDLNVVMTSTGGFIEVQGTAEGAPFQPADLNAMLALAQKGMTEIFELQNAALAD.

Residues R87 and 125–127 (GTR) contribute to the phosphate site.

The protein belongs to the RNase PH family. Homohexameric ring arranged as a trimer of dimers.

The catalysed reaction is tRNA(n+1) + phosphate = tRNA(n) + a ribonucleoside 5'-diphosphate. In terms of biological role, phosphorolytic 3'-5' exoribonuclease that plays an important role in tRNA 3'-end maturation. Removes nucleotide residues following the 3'-CCA terminus of tRNAs; can also add nucleotides to the ends of RNA molecules by using nucleoside diphosphates as substrates, but this may not be physiologically important. Probably plays a role in initiation of 16S rRNA degradation (leading to ribosome degradation) during starvation. This Pseudomonas fluorescens (strain SBW25) protein is Ribonuclease PH.